The sequence spans 298 residues: PYK10-binding protein 1 (298 aa).

Alanine 2 carries the N-acetylalanine modification. 2 consecutive Jacalin-type lectin domains span residues 2–142 (AQKV…YFAP) and 152–295 (AKQL…HVRP). Serine 20 carries the post-translational modification Phosphoserine.

The protein belongs to the jacalin lectin family. In terms of assembly, component of the PYK10 complex, at least composed of PYK10/BGLU23, BGLU21, BGLU22, JAL22, JAL23, PBP1/JAL30, PBP2/JAL31, JAL32, JAL33, JAL34, JAL35, GLL22 and GLL23. As to expression, expressed exclusively in roots.

Its subcellular location is the cytoplasm. Inhibitor-type lectin that may regulate the correct polymerization of BGLU23/PYK10 upon tissue damage. Activates BGLU21, BGLU22 and BGLU23. This is PYK10-binding protein 1 (PBP1) from Arabidopsis thaliana (Mouse-ear cress).